Reading from the N-terminus, the 286-residue chain is 4-hydroxybenzoate octaprenyltransferase (286 aa).

7 helical membrane-spanning segments follow: residues 21–40 (GTLL…AGGM), 95–115 (ILFV…NGLV), 142–162 (FLGI…TGEV), 167–187 (WWLF…YAMV), 210–230 (QIIG…GWSA), 235–255 (LYGL…MLIF), and 266–286 (FLNN…DYLI).

This sequence belongs to the UbiA prenyltransferase family. The cofactor is Mg(2+).

The protein resides in the cell inner membrane. It catalyses the reaction all-trans-octaprenyl diphosphate + 4-hydroxybenzoate = 4-hydroxy-3-(all-trans-octaprenyl)benzoate + diphosphate. The protein operates within cofactor biosynthesis; ubiquinone biosynthesis. Catalyzes the prenylation of para-hydroxybenzoate (PHB) with an all-trans polyprenyl group. Mediates the second step in the final reaction sequence of ubiquinone-8 (UQ-8) biosynthesis, which is the condensation of the polyisoprenoid side chain with PHB, generating the first membrane-bound Q intermediate 3-octaprenyl-4-hydroxybenzoate. This Shewanella baltica (strain OS185) protein is 4-hydroxybenzoate octaprenyltransferase.